The following is a 3587-amino-acid chain: Surfactin synthase subunit 1 (3587 aa).

Carrier domains follow at residues 971 to 1046 (APRN…DHRE), 2010 to 2085 (APRN…ASAE), and 3038 to 3112 (APTT…ERAE). Residues Ser-1006, Ser-2045, and Ser-3073 each carry the O-(pantetheine 4'-phosphoryl)serine modification.

It belongs to the ATP-dependent AMP-binding enzyme family. It depends on pantetheine 4'-phosphate as a cofactor.

It participates in antibiotic biosynthesis; surfactin biosynthesis. Its function is as follows. This protein is a multifunctional enzyme able to activate and polymerize the amino acids Leu, Glu, Asp and Val. Activation sites for these AA consist of individual domains. The chain is Surfactin synthase subunit 1 (srfAA) from Bacillus subtilis (strain 168).